Reading from the N-terminus, the 265-residue chain is Esterase claE (265 aa).

Residues S121, D211, and H239 each act as charge relay system in the active site.

The protein belongs to the LovG family.

It participates in secondary metabolite biosynthesis. Esterase; part of the cla gene cluster that produces clavatol and ortho-quinone methide. The clavatol biosynthesis cluster cla and the terrestric acid cluster tra are both involved in the production of peniphenones and penilactones. The non-reducing PKS claF is responsible for the formation of clavatol from successive condensations of 3 malonyl-CoA units, presumably with a simple acetyl-CoA starter unit, and 2 methylation steps. The esterase claE probably collaborates with claF by catalyzing the hydrolysis of ACP-bound acyl intermediates to free the ACP from stalled intermediates. The clavatol oxidase claD then converts clavatol to hydroxyclavatol. Spontaneous dehydration of hydroxyclavatol leads to the accumulation of the highly active ortho-quinone methide. On the other hand, the PKS-NRPS hybrid traA is involved in the formation of crustosic acid, with the help of traB and traD. The polyketide synthase module (PKS) of traA is responsible for the synthesis of the polyketide backbone via the condensation of an acetyl-CoA starter unit with 3 malonyl-CoA units. The downstream nonribosomal peptide synthetase (NRPS) module then amidates the carboxyl end of the polyketide with L-malic acid. Because traA lacks a designated enoylreductase (ER) domain, the required activity is provided the enoyl reductase traG. Crustosic acid undergoes decarboxylation and isomerization to the terrestric acid, catalyzed by the 2-oxoglutarate-dependent dioxygenase traH. Both acids are further converted to the 2 gamma-butyrolactones (R)-5-methyltetronic acid and (S)-5-carboxylmethyltetronic acid, with involvement of the cytochrome P450 monooxygenase claJ. Spontaneous addition of the methide to these gamma-butyrolactones leads to peniphenone D and penilactone D, which undergo again stereospecific attacking by methide to give penilactones A and B. In Penicillium crustosum (Blue mold fungus), this protein is Esterase claE.